Consider the following 195-residue polypeptide: Imidazoleglycerol-phosphate dehydratase (195 aa).

It belongs to the imidazoleglycerol-phosphate dehydratase family.

The protein resides in the cytoplasm. The enzyme catalyses D-erythro-1-(imidazol-4-yl)glycerol 3-phosphate = 3-(imidazol-4-yl)-2-oxopropyl phosphate + H2O. It participates in amino-acid biosynthesis; L-histidine biosynthesis; L-histidine from 5-phospho-alpha-D-ribose 1-diphosphate: step 6/9. This chain is Imidazoleglycerol-phosphate dehydratase, found in Paraburkholderia phymatum (strain DSM 17167 / CIP 108236 / LMG 21445 / STM815) (Burkholderia phymatum).